The following is a 353-amino-acid chain: Photosystem II protein D1 (353 aa).

Position 2 is an N-acetylthreonine (Thr2). Thr2 is subject to Phosphothreonine. Helical transmembrane passes span 29 to 46 (YIGW…TATS), 118 to 133 (HFLL…EWEL), and 142 to 156 (WIAI…AATA). His118 provides a ligand contact to chlorophyll a. Position 126 (Tyr126) interacts with pheophytin a. Residues Asp170 and Glu189 each coordinate [CaMn4O5] cluster. Residues 197-218 (FHMLGVAGVFGGSLFSAMHGSL) form a helical membrane-spanning segment. His198 contacts chlorophyll a. A quinone is bound by residues His215 and 264 to 265 (SF). Fe cation is bound at residue His215. Fe cation is bound at residue His272. A helical transmembrane segment spans residues 274-288 (FLAAWPVIGIWFTAL). Residues His332, Glu333, Asp342, and Ala344 each contribute to the [CaMn4O5] cluster site. The propeptide occupies 345 to 353 (TFEVSATNA).

Belongs to the reaction center PufL/M/PsbA/D family. In terms of assembly, PSII is composed of 1 copy each of membrane proteins PsbA, PsbB, PsbC, PsbD, PsbE, PsbF, PsbH, PsbI, PsbJ, PsbK, PsbL, PsbM, PsbT, PsbX, PsbY, PsbZ, Psb30/Ycf12, at least 3 peripheral proteins of the oxygen-evolving complex and a large number of cofactors. It forms dimeric complexes. The D1/D2 heterodimer binds P680, chlorophylls that are the primary electron donor of PSII, and subsequent electron acceptors. It shares a non-heme iron and each subunit binds pheophytin, quinone, additional chlorophylls, carotenoids and lipids. D1 provides most of the ligands for the Mn4-Ca-O5 cluster of the oxygen-evolving complex (OEC). There is also a Cl(-1) ion associated with D1 and D2, which is required for oxygen evolution. The PSII complex binds additional chlorophylls, carotenoids and specific lipids. serves as cofactor. In terms of processing, tyr-161 forms a radical intermediate that is referred to as redox-active TyrZ, YZ or Y-Z. C-terminally processed by CTPA; processing is essential to allow assembly of the oxygen-evolving complex and thus photosynthetic growth.

The protein resides in the plastid membrane. It catalyses the reaction 2 a plastoquinone + 4 hnu + 2 H2O = 2 a plastoquinol + O2. Photosystem II (PSII) is a light-driven water:plastoquinone oxidoreductase that uses light energy to abstract electrons from H(2)O, generating O(2) and a proton gradient subsequently used for ATP formation. It consists of a core antenna complex that captures photons, and an electron transfer chain that converts photonic excitation into a charge separation. The D1/D2 (PsbA/PsbD) reaction center heterodimer binds P680, the primary electron donor of PSII as well as several subsequent electron acceptors. The polypeptide is Photosystem II protein D1 (Cuscuta gronovii (Common dodder)).